Here is a 582-residue protein sequence, read N- to C-terminus: ATP-dependent lipid A-core flippase (582 aa).

Helical transmembrane passes span 16 to 36 (LWPH…ALVI), 69 to 89 (FIIL…GYCM), 153 to 173 (IIGL…VLVV), 250 to 270 (LANP…LYLA), and 275 to 295 (IKET…FGLL). The ABC transmembrane type-1 domain maps to 29–310 (VAVVALVINA…LTSVTSDFQR (282 aa)). An ABC transporter domain is found at 342–578 (IKVDNVTFTY…DGAYAQLHRI (237 aa)). 376-383 (GRSGSGKS) is an ATP binding site.

It belongs to the ABC transporter superfamily. Lipid exporter (TC 3.A.1.106) family. Homodimer.

Its subcellular location is the cell inner membrane. It carries out the reaction ATP + H2O + lipid A-core oligosaccharideSide 1 = ADP + phosphate + lipid A-core oligosaccharideSide 2.. Functionally, involved in lipopolysaccharide (LPS) biosynthesis. Translocates lipid A-core from the inner to the outer leaflet of the inner membrane. Transmembrane domains (TMD) form a pore in the inner membrane and the ATP-binding domain (NBD) is responsible for energy generation. The polypeptide is ATP-dependent lipid A-core flippase (Aliivibrio fischeri (strain ATCC 700601 / ES114) (Vibrio fischeri)).